A 99-amino-acid chain; its full sequence is Large ribosomal subunit protein bL21 (99 aa).

The protein belongs to the bacterial ribosomal protein bL21 family. In terms of assembly, part of the 50S ribosomal subunit. Contacts protein L20.

Functionally, this protein binds to 23S rRNA in the presence of protein L20. The protein is Large ribosomal subunit protein bL21 of Mycoplasmopsis pulmonis (strain UAB CTIP) (Mycoplasma pulmonis).